Reading from the N-terminus, the 926-residue chain is Ubiquitin carboxyl-terminal hydrolase 4 (926 aa).

The 124-residue stretch at 205–328 (SQMEILLIDI…WLKSNYGRQV (124 aa)) folds into the Rhodanese domain. A Phosphoserine modification is found at serine 443. One can recognise a USP domain in the interval 562 to 923 (VGLENLGNSC…NAYVLFYHRV (362 aa)). Catalysis depends on cysteine 571, which acts as the Nucleophile. Histidine 880 functions as the Proton acceptor in the catalytic mechanism.

It belongs to the peptidase C19 family. In terms of assembly, interacts with BRO1, RFU1 and VPS32. Associates with the 26S proteasome.

Its subcellular location is the cytoplasm. It localises to the late endosome membrane. It catalyses the reaction Thiol-dependent hydrolysis of ester, thioester, amide, peptide and isopeptide bonds formed by the C-terminal Gly of ubiquitin (a 76-residue protein attached to proteins as an intracellular targeting signal).. Its activity is regulated as follows. RFU1 is an inhibitor of deubiquitination activity. In terms of biological role, ubiquitin thioesterase that acts at the late endosome/prevacuolar compartment to recover ubiquitin from ubiquitinated membrane proteins en route to the vacuole. Also removes ubiquitin from soluble proteins targeted to proteasomes. Is essential to maintain a normal level of free ubiquitin. Involved in the ammonium-induced down-regulation of the GAP1 permease and the UME3 destruction in response to oxidative stress. Has a role in the RAD9 checkpoint response to TOP1 poisons. Required for promoting coordination of DNA replication and avoids DNA overreplication. The protein is Ubiquitin carboxyl-terminal hydrolase 4 (DOA4) of Saccharomyces cerevisiae (strain ATCC 204508 / S288c) (Baker's yeast).